The chain runs to 632 residues: Extracellular metalloproteinase 1 (632 aa).

The N-terminal stretch at 1 to 19 is a signal peptide; that stretch reads MHGLLLAAGLISLPLHVLA. A propeptide spanning residues 20 to 246 is cleaved from the precursor; it reads HPQPSSTSLA…VVDYVAHATF (227 aa). Residue asparagine 284 is glycosylated (N-linked (GlcNAc...) asparagine). Threonine 430 is a Zn(2+) binding site. Histidine 431 is a catalytic residue. Serine 434 contacts Zn(2+). Asparagine 591 is a glycosylation site (N-linked (GlcNAc...) asparagine).

Belongs to the peptidase M36 family. Requires Zn(2+) as cofactor.

It is found in the secreted. PMSF, soybean trypsin inhibitor (SBTI) and chymostatin strongly inhibit the proteinase. In terms of biological role, secreted metalloproteinase probably acting as a virulence factor. This is Extracellular metalloproteinase 1 (MEP1) from Arthroderma otae (Microsporum canis).